The chain runs to 367 residues: Queuine tRNA-ribosyltransferase (367 aa).

Catalysis depends on Asp-92, which acts as the Proton acceptor. Substrate is bound by residues 92–96, Asp-146, Gln-188, and Gly-215; that span reads DSGGF. The RNA binding stretch occupies residues 246 to 252; it reads GVGTPKD. The active-site Nucleophile is the Asp-265. Residues Cys-303, Cys-305, Cys-308, and His-334 each coordinate Zn(2+).

The protein belongs to the queuine tRNA-ribosyltransferase family. In terms of assembly, homodimer. Within each dimer, one monomer is responsible for RNA recognition and catalysis, while the other monomer binds to the replacement base PreQ1. Requires Zn(2+) as cofactor.

It catalyses the reaction 7-aminomethyl-7-carbaguanine + guanosine(34) in tRNA = 7-aminomethyl-7-carbaguanosine(34) in tRNA + guanine. The protein operates within tRNA modification; tRNA-queuosine biosynthesis. Catalyzes the base-exchange of a guanine (G) residue with the queuine precursor 7-aminomethyl-7-deazaguanine (PreQ1) at position 34 (anticodon wobble position) in tRNAs with GU(N) anticodons (tRNA-Asp, -Asn, -His and -Tyr). Catalysis occurs through a double-displacement mechanism. The nucleophile active site attacks the C1' of nucleotide 34 to detach the guanine base from the RNA, forming a covalent enzyme-RNA intermediate. The proton acceptor active site deprotonates the incoming PreQ1, allowing a nucleophilic attack on the C1' of the ribose to form the product. After dissociation, two additional enzymatic reactions on the tRNA convert PreQ1 to queuine (Q), resulting in the hypermodified nucleoside queuosine (7-(((4,5-cis-dihydroxy-2-cyclopenten-1-yl)amino)methyl)-7-deazaguanosine). The sequence is that of Queuine tRNA-ribosyltransferase from Francisella tularensis subsp. novicida (strain U112).